Reading from the N-terminus, the 179-residue chain is Shikimate kinase (179 aa).

ATP is bound at residue 22 to 27; the sequence is GTGKSS. Mg(2+) is bound at residue S26. Substrate contacts are provided by D44, R68, and G90. R128 is an ATP binding site. R147 is a substrate binding site.

It belongs to the shikimate kinase family. Monomer. Mg(2+) serves as cofactor.

Its subcellular location is the cytoplasm. It carries out the reaction shikimate + ATP = 3-phosphoshikimate + ADP + H(+). It functions in the pathway metabolic intermediate biosynthesis; chorismate biosynthesis; chorismate from D-erythrose 4-phosphate and phosphoenolpyruvate: step 5/7. In terms of biological role, catalyzes the specific phosphorylation of the 3-hydroxyl group of shikimic acid using ATP as a cosubstrate. The polypeptide is Shikimate kinase (Geobacter metallireducens (strain ATCC 53774 / DSM 7210 / GS-15)).